We begin with the raw amino-acid sequence, 631 residues long: Eukaryotic translation initiation factor 3 subunit L (631 aa).

One can recognise a PCI domain in the interval 335 to 526; the sequence is TFVSVLIFFI…AETTLLDGER (192 aa). A disordered region spans residues 571–631; that stretch reads KSAPLPVRKP…PKSRQARIAA (61 aa). The span at 580 to 612 shows a compositional bias: low complexity; sequence PASSSAPAPATTAAPISKSGESAAPAPAEAPAA.

This sequence belongs to the eIF-3 subunit L family. Component of the eukaryotic translation initiation factor 3 (eIF-3) complex.

It localises to the cytoplasm. In terms of biological role, component of the eukaryotic translation initiation factor 3 (eIF-3) complex, which is involved in protein synthesis of a specialized repertoire of mRNAs and, together with other initiation factors, stimulates binding of mRNA and methionyl-tRNAi to the 40S ribosome. The eIF-3 complex specifically targets and initiates translation of a subset of mRNAs involved in cell proliferation. This Cryptococcus neoformans var. neoformans serotype D (strain B-3501A) (Filobasidiella neoformans) protein is Eukaryotic translation initiation factor 3 subunit L.